We begin with the raw amino-acid sequence, 258 residues long: Snake venom serine protease CL2 (258 aa).

A signal peptide spans 1 to 18; that stretch reads MVLIRVLANLLIIQLSYA. The propeptide occupies 19–24; that stretch reads QKSSEL. The region spanning 25–249 is the Peptidase S1 domain; it reads VIGGDECNIN…YTDWIKSIIA (225 aa). Intrachain disulfides connect Cys-31–Cys-163, Cys-50–Cys-66, Cys-98–Cys-256, Cys-142–Cys-210, Cys-174–Cys-189, and Cys-200–Cys-225. N-linked (GlcNAc...) asparagine glycosylation occurs at Asn-44. Residue His-65 is the Charge relay system of the active site. Asn-103 is a glycosylation site (N-linked (GlcNAc...) asparagine). Asp-110 (charge relay system) is an active-site residue. N-linked (GlcNAc...) asparagine glycosylation occurs at Asn-121. Catalysis depends on Ser-204, which acts as the Charge relay system. Asn-251 carries an N-linked (GlcNAc...) asparagine glycan.

It belongs to the peptidase S1 family. Snake venom subfamily. Monomer. In terms of tissue distribution, expressed by the venom gland.

Its subcellular location is the secreted. In terms of biological role, snake venom serine protease that may act in the hemostasis system of the prey. This Trimeresurus stejnegeri (Chinese green tree viper) protein is Snake venom serine protease CL2.